A 190-amino-acid chain; its full sequence is Elongation factor P-like protein (190 aa).

It belongs to the elongation factor P family.

The sequence is that of Elongation factor P-like protein from Klebsiella pneumoniae (strain 342).